A 639-amino-acid chain; its full sequence is Chaperone protein HtpG (639 aa).

The interval 1–348 is a; substrate-binding; the sequence is MAQYEFQTEV…SEDLPLNVSR (348 aa). The segment at 349–565 is b; the sequence is EILQQNRVLA…ENDPTVQMER (217 aa). The interval 566 to 639 is c; it reads LMRATGQTHK…KRVNRLLARG (74 aa).

Belongs to the heat shock protein 90 family. Homodimer.

Its subcellular location is the cytoplasm. Its function is as follows. Molecular chaperone. Has ATPase activity. This Treponema pallidum (strain Nichols) protein is Chaperone protein HtpG.